The primary structure comprises 286 residues: Pre-mRNA-processing protein 45 (286 aa).

Disordered regions lie at residues 111–146 (TNDI…SSSK) and 253–286 (KQRN…RRRY). The span at 132–145 (PNQEQQQQSSSSSS) shows a compositional bias: low complexity. The segment covering 253–279 (KQRNEIRQQKQLQEKRLRDEKIKEIAN) has biased composition (basic and acidic residues).

The protein belongs to the SNW family. In terms of assembly, associated with the spliceosome.

It is found in the nucleus. Functionally, involved in pre-mRNA splicing. The protein is Pre-mRNA-processing protein 45 (PRP45) of Candida albicans (strain SC5314 / ATCC MYA-2876) (Yeast).